A 285-amino-acid chain; its full sequence is Probable methyltransferase ltbC (285 aa).

Positions 1 to 22 (MASTGQTNNYKQGYSSQTVETQ) are disordered.

It belongs to the class I-like SAM-binding methyltransferase superfamily. In terms of assembly, monomer.

In terms of biological role, probable methyltransferase; part of the gene cluster that mediates the biosynthesis of luteodienoside A, a glycosylated polyketide consisting of an unusual 1-O-beta-D-glucopyranosyl-myo-inositol (glucinol) ester of 3-hydroxy-2,2,4-trimethylocta-4,6-dienoic acid. The HR-PKS ltbA produces the trimethylated polyketide chain from acetyl-CoA, malonyl-CoA and S-adenosylmethionine (SAM), and the ltbA cAT domain then uses glucinol produced by the glycosyltransferase ltbB as an offloading substrate to release luteodienoside A. Since ltbA and ltbB are sufficient for the biosynthesis of luteodienoside A, the functions of the methyltransferase ltbC and the FAD-binding monooxygenase ltbD within the pathway remain obscur. This chain is Probable methyltransferase ltbC, found in Aspergillus luteorubrus.